A 669-amino-acid chain; its full sequence is DNA ligase (669 aa).

Residues 34–38 (DAEYD), 83–84 (SL), and Glu-113 contribute to the NAD(+) site. Residue Lys-115 is the N6-AMP-lysine intermediate of the active site. NAD(+) contacts are provided by Arg-136, Glu-170, Lys-286, and Lys-310. Zn(2+)-binding residues include Cys-404, Cys-407, Cys-422, and Cys-427. The BRCT domain maps to 591–669 (IADSPFAGKT…EEALVKAISH (79 aa)).

This sequence belongs to the NAD-dependent DNA ligase family. LigA subfamily. It depends on Mg(2+) as a cofactor. Mn(2+) serves as cofactor.

It carries out the reaction NAD(+) + (deoxyribonucleotide)n-3'-hydroxyl + 5'-phospho-(deoxyribonucleotide)m = (deoxyribonucleotide)n+m + AMP + beta-nicotinamide D-nucleotide.. Its function is as follows. DNA ligase that catalyzes the formation of phosphodiester linkages between 5'-phosphoryl and 3'-hydroxyl groups in double-stranded DNA using NAD as a coenzyme and as the energy source for the reaction. It is essential for DNA replication and repair of damaged DNA. The chain is DNA ligase from Halalkalibacterium halodurans (strain ATCC BAA-125 / DSM 18197 / FERM 7344 / JCM 9153 / C-125) (Bacillus halodurans).